Here is a 235-residue protein sequence, read N- to C-terminus: Glucosamine-6-phosphate deaminase (235 aa).

D62 (proton acceptor; for enolization step) is an active-site residue. N128 serves as the catalytic For ring-opening step. Catalysis depends on H130, which acts as the Proton acceptor; for ring-opening step. E135 (for ring-opening step) is an active-site residue.

It belongs to the glucosamine/galactosamine-6-phosphate isomerase family. NagB subfamily.

It carries out the reaction alpha-D-glucosamine 6-phosphate + H2O = beta-D-fructose 6-phosphate + NH4(+). Its pathway is amino-sugar metabolism; N-acetylneuraminate degradation; D-fructose 6-phosphate from N-acetylneuraminate: step 5/5. Functionally, catalyzes the reversible isomerization-deamination of glucosamine 6-phosphate (GlcN6P) to form fructose 6-phosphate (Fru6P) and ammonium ion. The sequence is that of Glucosamine-6-phosphate deaminase from Streptococcus gordonii (strain Challis / ATCC 35105 / BCRC 15272 / CH1 / DL1 / V288).